The following is a 294-amino-acid chain: Acetylglutamate kinase (294 aa).

Residues 64 to 65, Arg86, and Asn189 each bind substrate; that span reads GG.

This sequence belongs to the acetylglutamate kinase family. ArgB subfamily.

The protein localises to the cytoplasm. It carries out the reaction N-acetyl-L-glutamate + ATP = N-acetyl-L-glutamyl 5-phosphate + ADP. Its pathway is amino-acid biosynthesis; L-arginine biosynthesis; N(2)-acetyl-L-ornithine from L-glutamate: step 2/4. Its function is as follows. Catalyzes the ATP-dependent phosphorylation of N-acetyl-L-glutamate. In Carboxydothermus hydrogenoformans (strain ATCC BAA-161 / DSM 6008 / Z-2901), this protein is Acetylglutamate kinase.